A 500-amino-acid chain; its full sequence is tRNA modification GTPase MnmE (500 aa).

Residues R24, E120, and K159 each coordinate (6S)-5-formyl-5,6,7,8-tetrahydrofolate. The TrmE-type G domain maps to 256-420 (GIPVAIIGET…LEKKLVQAAA (165 aa)). A K(+)-binding site is contributed by N266. GTP contacts are provided by residues 266-271 (NAGKST), 285-291 (SDIHGTT), and 310-313 (DTAG). Mg(2+) is bound at residue S270. K(+)-binding residues include S285, I287, and T290. T291 contacts Mg(2+). K500 is a binding site for (6S)-5-formyl-5,6,7,8-tetrahydrofolate.

Belongs to the TRAFAC class TrmE-Era-EngA-EngB-Septin-like GTPase superfamily. TrmE GTPase family. As to quaternary structure, homodimer. Heterotetramer of two MnmE and two MnmG subunits. The cofactor is K(+).

It localises to the cytoplasm. Its function is as follows. Exhibits a very high intrinsic GTPase hydrolysis rate. Involved in the addition of a carboxymethylaminomethyl (cmnm) group at the wobble position (U34) of certain tRNAs, forming tRNA-cmnm(5)s(2)U34. This Phocaeicola vulgatus (strain ATCC 8482 / DSM 1447 / JCM 5826 / CCUG 4940 / NBRC 14291 / NCTC 11154) (Bacteroides vulgatus) protein is tRNA modification GTPase MnmE.